Here is a 269-residue protein sequence, read N- to C-terminus: UPF0162 protein bbp_163 (269 aa).

It belongs to the UPF0162 family.

This chain is UPF0162 protein bbp_163, found in Buchnera aphidicola subsp. Baizongia pistaciae (strain Bp).